The chain runs to 434 residues: Trigger factor (434 aa).

A PPIase FKBP-type domain is found at 160–245 (GDKVKMNFVG…LTEVQAANLP (86 aa)).

Belongs to the FKBP-type PPIase family. Tig subfamily.

It is found in the cytoplasm. The catalysed reaction is [protein]-peptidylproline (omega=180) = [protein]-peptidylproline (omega=0). In terms of biological role, involved in protein export. Acts as a chaperone by maintaining the newly synthesized protein in an open conformation. Functions as a peptidyl-prolyl cis-trans isomerase. The protein is Trigger factor of Shewanella sp. (strain W3-18-1).